A 5207-amino-acid chain; its full sequence is E3 ubiquitin-protein ligase RNF213 (5207 aa).

Disordered regions lie at residues 1-20 (MECP…FCSQ) and 27-365 (PAAP…EADV). Positions 34 to 43 (SENNNSTMAS) are enriched in polar residues. A compositionally biased stretch (basic residues) spans 89–100 (KKKKRKKKKKGN). Low complexity-rich tracts occupy residues 101 to 117 (KSAS…PASP) and 136 to 157 (SQAQ…ATTP). The segment covering 188-197 (SEAQSSPQFQ) has biased composition (polar residues). Phosphoserine occurs at positions 208 and 217. Residues 248-266 (GGSSEPGTELQTTEQQAGA) are compositionally biased toward polar residues. Composition is skewed to basic and acidic residues over residues 285-294 (AGKEMKEKTQ), 309-346 (HCQE…EGKN), and 353-362 (KNEKEQKNQE). The stretch at 343–374 (EGKNRSAAAVKNEKEQKNQEADVQEVKASTLS) forms a coiled coil. Lys1151 participates in a covalent cross-link: Glycyl lysine isopeptide (Lys-Gly) (interchain with G-Cter in SUMO2). Phosphoserine is present on Ser1258. Residues 1995-2000 (GVGKSL), Glu2098, Asp2155, and Arg2216 contribute to the ATP site. Ser2273 carries the phosphoserine modification. The ATP site is built by Lys2499 and Ser2574. 10 residues coordinate Zn(2+): Cys3997, Cys4000, Cys4012, His4014, Cys4017, Cys4020, Cys4032, Cys4035, Cys4505, and His4509. The RING-type zinc-finger motif lies at 3997 to 4036 (CSICLGDAKDPVCLPCDHVHCLRCLRAWFASEQMICPYCL). Residues 4483 to 4555 (MPEDLLAQAR…VKDKADRTQT (73 aa)) form an RZ-type zinc finger. The active-site Nucleophile; for E3 ubiquitin-lipopolysaccharide ligase activity is the Cys4516. Zn(2+)-binding residues include Cys4525 and Cys4528.

It belongs to the AAA ATPase family. Monomer. Interacts with UBE2L3/UBCH7; UBE2L3/UBCH7 is the most efficient ubiquitin-conjugating enzyme E2 for the ubiquitin ligase activity. Interacts with UBE2N/UBC13; promoting 'Lys-63'-linked ubiquitination of target proteins. As to quaternary structure, (Microbial infection) Interacts with M.tuberculosis protein Rv3655c, which impairs caspase-8 activation and suppresses macrophage apoptosis by blocking the extrinsic pathway. In terms of processing, autoubiquitinated. In terms of tissue distribution, widely expressed (at protein level). As to expression, major isoform detected in all tissues examined. Minor isoform with restricted expression.

It localises to the cytoplasm. It is found in the cytosol. Its subcellular location is the lipid droplet. It carries out the reaction S-ubiquitinyl-[E2 ubiquitin-conjugating enzyme]-L-cysteine + [acceptor protein]-L-lysine = [E2 ubiquitin-conjugating enzyme]-L-cysteine + N(6)-ubiquitinyl-[acceptor protein]-L-lysine.. The enzyme catalyses ATP + H2O = ADP + phosphate + H(+). Its pathway is protein modification; protein ubiquitination. Its function is as follows. Atypical E3 ubiquitin ligase that can catalyze ubiquitination of both proteins and lipids, and which is involved in various processes, such as lipid metabolism, angiogenesis and cell-autonomous immunity. Acts as a key immune sensor by catalyzing ubiquitination of the lipid A moiety of bacterial lipopolysaccharide (LPS) via its RZ-type zinc-finger: restricts the proliferation of cytosolic bacteria, such as Salmonella, by generating the bacterial ubiquitin coat through the ubiquitination of LPS. Also acts indirectly by mediating the recruitment of the LUBAC complex, which conjugates linear polyubiquitin chains. Ubiquitination of LPS triggers cell-autonomous immunity, such as antibacterial autophagy, leading to degradation of the microbial invader. Involved in lipid metabolism by regulating fat storage and lipid droplet formation; act by inhibiting the lipolytic process. Also regulates lipotoxicity by inhibiting desaturation of fatty acids. Also acts as an E3 ubiquitin-protein ligase via its RING-type zinc finger: mediates 'Lys-63'-linked ubiquitination of target proteins. Involved in the non-canonical Wnt signaling pathway in vascular development: acts by mediating ubiquitination and degradation of FLNA and NFATC2 downstream of RSPO3, leading to inhibit the non-canonical Wnt signaling pathway and promoting vessel regression. Also has ATPase activity; ATPase activity is required for ubiquitination of LPS. This Homo sapiens (Human) protein is E3 ubiquitin-protein ligase RNF213.